A 512-amino-acid chain; its full sequence is ATP synthase subunit alpha (512 aa).

Residue 169–176 (GDRQTGKT) coordinates ATP.

It belongs to the ATPase alpha/beta chains family. In terms of assembly, F-type ATPases have 2 components, CF(1) - the catalytic core - and CF(0) - the membrane proton channel. CF(1) has five subunits: alpha(3), beta(3), gamma(1), delta(1), epsilon(1). CF(0) has three main subunits: a(1), b(2) and c(9-12). The alpha and beta chains form an alternating ring which encloses part of the gamma chain. CF(1) is attached to CF(0) by a central stalk formed by the gamma and epsilon chains, while a peripheral stalk is formed by the delta and b chains.

The protein resides in the cell inner membrane. The enzyme catalyses ATP + H2O + 4 H(+)(in) = ADP + phosphate + 5 H(+)(out). Produces ATP from ADP in the presence of a proton gradient across the membrane. The alpha chain is a regulatory subunit. The sequence is that of ATP synthase subunit alpha from Leptothrix cholodnii (strain ATCC 51168 / LMG 8142 / SP-6) (Leptothrix discophora (strain SP-6)).